The primary structure comprises 306 residues: MHCKILGLPVQEGTGRKGCNMGPDSYRAAGIADAIRELGHECTDLGNLAPAAQRPLQHPNHAIKALPYAVAWIEAISEAAYRESAEGFPIFLGGDHLLAAGTVPGIARRAAEKGRKQFVLWLDAHTDFHTLETTTSGNLHGTPVAYYTGQKGFEGYFPKLAAPIDPHNVCMLGIRSVDPAEREAVKKTEVIVYDMRLIDEHGVAALLRRFLERVKAEDGLLHVSLDVDFLDPSIAPAVGTTVPGGATFREAHLIMEMLHDSGLVTSLDLVELNPFLDERGRTAAVMVDLMASLLGRSVMDRPTISY.

His96, Asp123, His125, and Asp127 together coordinate Mn(2+). Substrate is bound by residues 125–129 (HTDFH), 136–138 (SGN), and Asp178. Residues Asp226 and Asp228 each contribute to the Mn(2+) site. Residues Thr240 and Glu271 each coordinate substrate.

The protein belongs to the arginase family. It depends on Mn(2+) as a cofactor.

It carries out the reaction L-arginine + H2O = urea + L-ornithine. It participates in nitrogen metabolism; urea cycle; L-ornithine and urea from L-arginine: step 1/1. In Brucella abortus biovar 1 (strain 9-941), this protein is Arginase (arcB).